The chain runs to 182 residues: Capsid protein (182 aa).

Positions 1 to 25 are disordered; sequence MSSAAQPMSRRARRRAARRALGSQP.

The protein localises to the virion. In terms of biological role, capsid protein self-assembles to form a quasi-spherical capsid, about 26 nm, or bacilliform. In Olive latent virus 2 (isolate Italy) (OLV-2), this protein is Capsid protein.